A 122-amino-acid polypeptide reads, in one-letter code: Small ribosomal subunit protein uS13 (122 aa).

A disordered region spans residues 99–122 (RGQRTHTNARTRKGPAKAIAGKKK).

It belongs to the universal ribosomal protein uS13 family. In terms of assembly, part of the 30S ribosomal subunit. Forms a loose heterodimer with protein S19. Forms two bridges to the 50S subunit in the 70S ribosome.

Functionally, located at the top of the head of the 30S subunit, it contacts several helices of the 16S rRNA. In the 70S ribosome it contacts the 23S rRNA (bridge B1a) and protein L5 of the 50S subunit (bridge B1b), connecting the 2 subunits; these bridges are implicated in subunit movement. Contacts the tRNAs in the A and P-sites. This chain is Small ribosomal subunit protein uS13, found in Rhizobium etli (strain ATCC 51251 / DSM 11541 / JCM 21823 / NBRC 15573 / CFN 42).